The primary structure comprises 187 residues: Inner membrane-spanning protein YciB (187 aa).

5 helical membrane-spanning segments follow: residues 25–45 (ATGALIAATAIQIVVTYALYK), 50–70 (MQLITFLMVAIFGGMTIFLHD), 76–96 (WKVTIVYAVFAIGLTVSHVMG), 118–138 (INWAWVGFFTFCAGLNIYVAY), and 148–168 (FKVFGLLAATLVFTVLTGGYI).

This sequence belongs to the YciB family.

The protein localises to the cell inner membrane. Its function is as follows. Plays a role in cell envelope biogenesis, maintenance of cell envelope integrity and membrane homeostasis. The polypeptide is Inner membrane-spanning protein YciB (Vibrio vulnificus (strain CMCP6)).